The chain runs to 72 residues: MIIPIRCFTCGRPIAHLWEKYVELIEEEGMEPGEALDELGVDRYCCRRMFLSHVDLLEESLPYTPPRLGMPR.

Zn(2+) is bound by residues cysteine 7, cysteine 10, cysteine 45, and cysteine 46.

Belongs to the archaeal Rpo10/eukaryotic RPB10 RNA polymerase subunit family. As to quaternary structure, part of the RNA polymerase complex. The cofactor is Zn(2+).

The protein localises to the cytoplasm. The enzyme catalyses RNA(n) + a ribonucleoside 5'-triphosphate = RNA(n+1) + diphosphate. In terms of biological role, DNA-dependent RNA polymerase (RNAP) catalyzes the transcription of DNA into RNA using the four ribonucleoside triphosphates as substrates. In Methanopyrus kandleri (strain AV19 / DSM 6324 / JCM 9639 / NBRC 100938), this protein is DNA-directed RNA polymerase subunit Rpo10.